The chain runs to 935 residues: Formin-I (935 aa).

Residues 35-76 (QQQQQQQQQQINNENENSINNQENKENNNKDNNNNNNKEIKQ) adopt a coiled-coil conformation. Disordered stretches follow at residues 52 to 78 (SINN…KQSS), 380 to 511 (LSSA…QLTP), and 561 to 590 (KEKM…QSLS). A compositionally biased stretch (low complexity) spans 384–407 (KKQPQQQPQKDVTSSSSSSSNSSS). Residues 418–428 (ITTNDSSSSNP) show a composition bias toward polar residues. Positions 431–443 (DFDKLSLSSDDKV) are enriched in basic and acidic residues. Residues 444 to 454 (NNNNVQIENTT) show a composition bias toward polar residues. The region spanning 444 to 505 (NNNNVQIENT…KPNNSGGGGG (62 aa)) is the FH1 domain. Over residues 456–482 (SVPPPPPVGAPPPPPPPPPPPPPPPPS) the composition is skewed to pro residues. Residues 484-499 (LKLNRNRISTPKKPNN) are compositionally biased toward polar residues. An FH2 domain is found at 506-935 (GGQLTPLQKK…SLNLSTLNSK (430 aa)). Residues 568-583 (NLNNSNNNNNNNSNNN) show a composition bias toward low complexity. Coiled coils occupy residues 702-730 (SLLD…FIKV) and 803-834 (QSSL…QQLL).

This sequence belongs to the formin homology family. Diaphanous subfamily.

Formins play an important role in the nucleation of actin and the formation of linear actin filaments. The chain is Formin-I (forI) from Dictyostelium discoideum (Social amoeba).